A 2136-amino-acid polypeptide reads, in one-letter code: U5 small nuclear ribonucleoprotein 200 kDa helicase (2136 aa).

Residues Ser-17 and Ser-26 each carry the phosphoserine modification. Lys-46 is covalently cross-linked (Glycyl lysine isopeptide (Lys-Gly) (interchain with G-Cter in SUMO2)). The disordered stretch occupies residues 50–80 (TRMGDKAQRTKPQMQEERRAKRRKRDEDRHD). Residues 54–84 (DKAQRTKPQMQEERRAKRRKRDEDRHDINKM) are a coiled coil. Ser-225 bears the Phosphoserine mark. Thr-389 bears the Phosphothreonine mark. Residues 395–2129 (DLDQGGEALA…YKFSVDVKEA (1735 aa)) form an interaction with C9orf78 and WBP4 region. The region spanning 490–673 (RAALETDENL…FLRVDPAKGL (184 aa)) is the Helicase ATP-binding 1 domain. 503–510 (APTGAGKT) is a binding site for ATP. A DEIH box motif is present at residues 615–618 (DEIH). The 238-residue stretch at 684–921 (PLEQTYVGIT…NAKDAVNWLG (238 aa)) folds into the Helicase C-terminal 1 domain. The residue at position 709 (Tyr-709) is a Phosphotyrosine. Lys-971 carries the N6-acetyllysine modification. An SEC63 1 domain is found at 981-1286 (VTELGRIASH…SCETQLPVSF (306 aa)). The interaction with TSSC4 stretch occupies residues 1282–2136 (LPVSFRHLIL…KEAETDSDSD (855 aa)). A Helicase ATP-binding 2 domain is found at 1337–1512 (NTVYNSDDNV…WLGCSATSTF (176 aa)). 1350-1357 (APTGSGKT) is a binding site for ATP. Thr-1428 bears the Phosphothreonine mark. Positions 1454–1457 (DEVH) match the DEVH box motif. The Helicase C-terminal 2 domain occupies 1545–1753 (PVYHAITKHS…TIENKQDAVD (209 aa)). A Phosphothreonine modification is found at Thr-1765. Positions 1812-2124 (PLNLGMIAAY…GCDQEYKFSV (313 aa)) constitute an SEC63 2 domain. Residue Ser-2002 is modified to Phosphoserine. Position 2131 is a phosphothreonine (Thr-2131). Phosphoserine occurs at positions 2133 and 2135.

Belongs to the helicase family. SKI2 subfamily. In terms of assembly, component of a core complex containing at least PRPF8, SNRNP200, EFTUD2 and SNRNP40. Component of the U5 snRNP and U4/U6-U5 tri-snRNP complexes, building blocks of the spliceosome. Component of the U4/U6-U5 tri-snRNP complex composed of the U4, U6 and U5 snRNAs and at least PRPF3, PRPF4, PRPF6, PRPF8, PRPF31, SNRNP200, TXNL4A, SNRNP40, DDX23, CD2BP2, PPIH, SNU13, EFTUD2, SART1 and USP39. Component of precatalytic, catalytic and postcatalytic spliceosomal complexes. Component of the minor spliceosome, which splices U12-type introns. Interacts with C9orf78; the interaction is direct and mutually exclusive with its interaction with WBP4. Interacts with WBP4; the interaction is mutually exclusive with its interaction with C9orf78. Interacts with PRPF8. Interacts with TSSC4; the interaction is direct, excludes recruitment of C9ORF78 and WBP4 to SNRNP200 and negatively regulates its RNA helicase activity. In terms of tissue distribution, widely expressed.

It localises to the nucleus. It carries out the reaction ATP + H2O = ADP + phosphate + H(+). Its function is as follows. Catalyzes the ATP-dependent unwinding of U4/U6 RNA duplices, an essential step in the assembly of a catalytically active spliceosome. Plays a role in pre-mRNA splicing as a core component of precatalytic, catalytic and postcatalytic spliceosomal complexes. As a component of the minor spliceosome, involved in the splicing of U12-type introns in pre-mRNAs. Involved in spliceosome assembly, activation and disassembly. Mediates changes in the dynamic network of RNA-RNA interactions in the spliceosome. The polypeptide is U5 small nuclear ribonucleoprotein 200 kDa helicase (SNRNP200) (Homo sapiens (Human)).